The chain runs to 85 residues: uncharacterized protein (85 aa).

Belongs to the ycf76 family.

Its subcellular location is the plastid. The protein resides in the chloroplast. This is an uncharacterized protein from Oryza sativa subsp. japonica (Rice).